The following is a 187-amino-acid chain: Photosystem I assembly protein Ycf4 (187 aa).

2 helical membrane passes run 25–47 (YWWA…SSYL) and 62–84 (FVPQ…IYLW).

Belongs to the Ycf4 family.

It localises to the plastid. The protein resides in the chloroplast thylakoid membrane. Functionally, seems to be required for the assembly of the photosystem I complex. This is Photosystem I assembly protein Ycf4 from Mesostigma viride (Green alga).